Here is a 100-residue protein sequence, read N- to C-terminus: Putative septation protein SpoVG (100 aa).

The protein belongs to the SpoVG family.

Its function is as follows. Could be involved in septation. The polypeptide is Putative septation protein SpoVG (Clostridium novyi (strain NT)).